Here is a 166-residue protein sequence, read N- to C-terminus: Small ribosomal subunit protein uS5 (166 aa).

Residues 11-74 (LQEKLISVNR…DKARKNMIII (64 aa)) form the S5 DRBM domain.

It belongs to the universal ribosomal protein uS5 family. Part of the 30S ribosomal subunit. Contacts proteins S4 and S8.

Its function is as follows. With S4 and S12 plays an important role in translational accuracy. Located at the back of the 30S subunit body where it stabilizes the conformation of the head with respect to the body. This Wigglesworthia glossinidia brevipalpis protein is Small ribosomal subunit protein uS5.